The sequence spans 172 residues: Myosin regulatory light polypeptide 9 (172 aa).

A compositionally biased stretch (basic residues) spans 1 to 16 (MSSKRAKAKTTKKRPQ). Residues 1-20 (MSSKRAKAKTTKKRPQRATS) form a disordered region. Position 2 is an N-acetylserine (Ser-2). A Phosphothreonine; by MLCK, CIT and ROCK2 modification is found at Thr-19. Ser-20 carries the post-translational modification Phosphoserine; by CDC42BP, CIT, MLCK, PAK1, ROCK1, ROCK2, DAPK1, DAPK2 and ZIPK/DAPK3. EF-hand domains follow at residues 29 to 64 (SQIQEFKEAFNMIDQNRDGFIDKEDLHDMLASLGKN), 98 to 133 (DPEDVIRNAFACFDEEASGFIHEDHLRELLTTMGDR), and 134 to 169 (FTDEEVDEMYREAPIDKKGNFNYVEFTRILKHGAKD). Ca(2+)-binding residues include Asp-42, Asn-44, Asp-46, and Asp-53.

As to quaternary structure, myosin is a hexamer of 2 heavy chains and 4 light chains: interacts with myosin heavy chain MYO19. Interacts with LUZP1; the interaction results in inhibition of phosphorylation of MYL9 by DAPK3. In terms of processing, phosphorylation increases the actin-activated myosin ATPase activity and thereby regulates the contractile activity. It is required to generate the driving force in the migration of the cells but not necessary for localization of myosin-2 at the leading edge. Phosphorylation is required for myotube formation. Phosphorylated by DAPK3; DAPK3-mediated phosphorylation is inhibited by LUZP1.

It is found in the cytoplasm. It localises to the cytoskeleton. The protein localises to the cell cortex. Its function is as follows. Myosin regulatory subunit that plays an important role in regulation of both smooth muscle and nonmuscle cell contractile activity via its phosphorylation. Implicated in cytokinesis, receptor capping, and cell locomotion. In myoblasts, regulates PIEZO1-dependent cortical actomyosin assembly involved in myotube formation. This is Myosin regulatory light polypeptide 9 (Myl9) from Mus musculus (Mouse).